The primary structure comprises 243 residues: uncharacterized protein (243 aa).

Residues 157-181 form a disordered region; that stretch reads SEETKEQPDATTSEKSRSPECPKTT.

This is an uncharacterized protein from Rattus norvegicus (Rat).